The sequence spans 363 residues: NAD(P)H-quinone oxidoreductase subunit 1, chloroplastic (363 aa).

Helical transmembrane passes span 30–50, 98–118, 127–147, 165–185, 203–223, 248–268, 300–320, and 336–356; these read LFPIFTLVLGITIGVLVIVWL, FSIGPSIAVISIFLSYSVIPF, LSIGVFFWIAISSIAPVGLLM, AAQSISYEIPLALCVLSISLL, FWGWNLWRQPIGFIVFLISSL, YSGIKFGLFYIASYLNLLVSS, VFGTLIGIFITLAKTYLFLFI, and LLNLGWKFLLPISLGNLLLTT.

It belongs to the complex I subunit 1 family. In terms of assembly, NDH is composed of at least 16 different subunits, 5 of which are encoded in the nucleus.

Its subcellular location is the plastid. It localises to the chloroplast thylakoid membrane. The catalysed reaction is a plastoquinone + NADH + (n+1) H(+)(in) = a plastoquinol + NAD(+) + n H(+)(out). It catalyses the reaction a plastoquinone + NADPH + (n+1) H(+)(in) = a plastoquinol + NADP(+) + n H(+)(out). NDH shuttles electrons from NAD(P)H:plastoquinone, via FMN and iron-sulfur (Fe-S) centers, to quinones in the photosynthetic chain and possibly in a chloroplast respiratory chain. The immediate electron acceptor for the enzyme in this species is believed to be plastoquinone. Couples the redox reaction to proton translocation, and thus conserves the redox energy in a proton gradient. The sequence is that of NAD(P)H-quinone oxidoreductase subunit 1, chloroplastic from Nicotiana tomentosiformis (Tobacco).